A 146-amino-acid chain; its full sequence is MAVKIKLKRMGKVRTPQYRIVVADARAKRDGKAIEEIGKYHPKEEPSLIEVNSERVQYWLSVGAQPTDPVRHILKLTGDWQKFKGLPAPTKPLKVAEPKDKEAQEAAFQAVLKELVLPGSENKGGKSKKAEEKSAEKTAEKSEGEA.

Positions 119-146 (GSENKGGKSKKAEEKSAEKTAEKSEGEA) are disordered. Residues 128-146 (KKAEEKSAEKTAEKSEGEA) show a composition bias toward basic and acidic residues.

The protein belongs to the bacterial ribosomal protein bS16 family.

This is Small ribosomal subunit protein bS16 from Thermobifida fusca (strain YX).